We begin with the raw amino-acid sequence, 185 residues long: Casparian strip membrane protein 1 (185 aa).

The Cytoplasmic segment spans residues 1-32 (MKAVSIEAGERSKAKRVHGVNRGISVFDLVLR). Residues 33 to 53 (IVALVGTLASAVAMGTAGQAL) traverse the membrane as a helical segment. Residues 54–73 (SFSTQIVNFEAQYDDIDAFK) are Extracellular-facing. The chain crosses the membrane as a helical span at residues 74–94 (FFVVSNSITCVYLALSIPISI). Over 95 to 106 (FHIIRSRAGKSR) the chain is Cytoplasmic. The chain crosses the membrane as a helical span at residues 107–127 (VLLIVLDAIMLVFLTSGASAA). Residues 128–160 (AAIVYLAHNGNTSTNWFSICQQYTDFCQRSAGS) lie on the Extracellular side of the membrane. Asn-138 carries N-linked (GlcNAc...) asparagine glycosylation. The chain crosses the membrane as a helical span at residues 161-181 (LIGSFGAMALMVLLIILSSIA). The Cytoplasmic segment spans residues 182-185 (LSRR).

This sequence belongs to the Casparian strip membrane proteins (CASP) family. In terms of assembly, homodimer and heterodimers.

The protein resides in the cell membrane. Functionally, regulates membrane-cell wall junctions and localized cell wall deposition. Required for establishment of the Casparian strip membrane domain (CSD) and the subsequent formation of Casparian strips, a cell wall modification of the root endodermis that determines an apoplastic barrier between the intraorganismal apoplasm and the extraorganismal apoplasm and prevents lateral diffusion. This Solanum demissum (Wild potato) protein is Casparian strip membrane protein 1.